We begin with the raw amino-acid sequence, 487 residues long: Cyclic AMP-dependent transcription factor ATF-2 (487 aa).

The C2H2-type zinc-finger motif lies at 7 to 31; the sequence is FLCTAPGCGQRFTNEDHLAVHKHKH. Thr-34 is modified (phosphothreonine; by PKC/PRKCH). Residue Ser-44 is modified to Phosphoserine. Phosphothreonine; by MAPK11 and MAPK14 is present on Thr-51. Thr-53 bears the Phosphothreonine; by MAPK1, MAPK3, MAPK11, MAPK12, MAPK14 and PLK3 mark. At Thr-55 the chain carries Phosphothreonine; by VRK1. A phosphoserine mark is found at Ser-72 and Ser-94. A Phosphothreonine modification is found at Thr-98. Ser-103 is subject to Phosphoserine; by PKC/PRKCA and PKC/PRKCB. Disordered regions lie at residues 106 to 137 and 241 to 355; these read EEPS…PLAQ and PGIP…RQKR. Ser-118 is subject to Phosphoserine. The span at 264–275 shows a compositional bias: polar residues; sequence LTQQHPPVTNGD. An essential for its histone acetyltransferase activity region spans residues 278–281; the sequence is KGHG. Low complexity predominate over residues 300-316; sequence PATSTTETPASPAHTTP. Ser-310 carries the post-translational modification Phosphoserine. Phosphoserine; by PKC/PRKCA and PKC/PRKCB is present on Ser-322. Positions 328–345 are enriched in basic and acidic residues; it reads AANEDPDEKRRKFLERNR. The bZIP domain maps to 334-397; sequence DEKRRKFLER…AQLKQLLLAH (64 aa). The segment at 336 to 356 is basic motif; the sequence is KRRKFLERNRAAASRCRQKRK. Lys-339 carries the post-translational modification N6-acetyllysine. Ser-349 carries the post-translational modification Phosphoserine; by PKC/PRKCA and PKC/PRKCB. N6-acetyllysine is present on Lys-356. The leucine-zipper stretch occupies residues 362–390; the sequence is LEKKAEDLSSLNGQLQSEVTLLRNEVAQL. Residues 387–396 carry the Nuclear export signal motif; that stretch reads VAQLKQLLLA. The segment at 407 to 453 is disordered; that stretch reads KKSGYHTADKDDSSEDLSVPSSPHTEAIQHSSVSTSNGVSSTSKAEA. Phosphoserine occurs at positions 424 and 428. A compositionally biased stretch (polar residues) spans 425–436; sequence VPSSPHTEAIQH. The span at 437–449 shows a compositional bias: low complexity; the sequence is SSVSTSNGVSSTS. Ser-472 and Ser-480 each carry phosphoserine; by ATM.

This sequence belongs to the bZIP family. ATF subfamily. Binds DNA as a dimer and can form a homodimer in the absence of DNA. Can form a heterodimer with JUN. Heterodimerization is essential for its transcriptional activity. Interacts with SMAD3 and SMAD4. Interacts with the HK1/VDAC1 complex. Interacts with NBN, MRE11, XPO1, KAT5 and CUL3. Binds through its N-terminal region to UTF1 which acts as a coactivator of ATF2 transcriptional activity. Post-translationally, phosphorylation of Thr-51 by MAPK14 and MAPK11, and at Thr-53 by MAPK1/ERK2, MAPK3/ERK1, MAPK11, MAPK12 and MAPK14 in response to external stimulus like insulin causes increased transcriptional activity. Phosphorylated by PLK3 following hyperosmotic stress. Also phosphorylated and activated by JNK and CaMK4. ATM-mediated phosphorylation at Ser-472 and Ser-480 stimulates its function in DNA damage response. Phosphorylation at Ser-44, Thr-55 and Ser-103 activates its transcriptional activity. Phosphorylation at Thr-51 or Thr-53 enhances acetylation of histones H2B and H4.

The protein resides in the nucleus. The protein localises to the cytoplasm. It is found in the mitochondrion outer membrane. Transcriptional activator which regulates the transcription of various genes, including those involved in anti-apoptosis, cell growth, and DNA damage response. Dependent on its binding partner, binds to CRE (cAMP response element) consensus sequences (5'-TGACGTCA-3') or to AP-1 (activator protein 1) consensus sequences (5'-TGACTCA-3'). In the nucleus, contributes to global transcription and the DNA damage response, in addition to specific transcriptional activities that are related to cell development, proliferation and death. In the cytoplasm, interacts with and perturbs HK1- and VDAC1-containing complexes at the mitochondrial outer membrane, thereby impairing mitochondrial membrane potential, inducing mitochondrial leakage and promoting cell death. The phosphorylated form (mediated by ATM) plays a role in the DNA damage response and is involved in the ionizing radiation (IR)-induced S phase checkpoint control and in the recruitment of the MRN complex into the IR-induced foci (IRIF). Exhibits histone acetyltransferase (HAT) activity which specifically acetylates histones H2B and H4 in vitro. In concert with CUL3 and RBX1, promotes the degradation of KAT5 thereby attenuating its ability to acetylate and activate ATM. Can elicit oncogenic or tumor suppressor activities depending on the tissue or cell type. The sequence is that of Cyclic AMP-dependent transcription factor ATF-2 (Atf2) from Mus musculus (Mouse).